The following is a 211-amino-acid chain: Dihydrofolate reductase (211 aa).

Positions 7–210 (PIVGIVACLQ…YCFEFTLYNR (204 aa)) constitute a DHFR domain. Residues Ala-13 and 20-26 (GIGFRGG) contribute to the NADP(+) site. Residue 34-39 (EMKYFR) coordinates substrate. Residue 58–60 (RKT) coordinates NADP(+). Arg-74 is a binding site for substrate. Residues 80–82 (SRS) and 123–130 (GGGEVYSQ) each bind NADP(+).

This sequence belongs to the dihydrofolate reductase family.

It catalyses the reaction (6S)-5,6,7,8-tetrahydrofolate + NADP(+) = 7,8-dihydrofolate + NADPH + H(+). Its pathway is cofactor biosynthesis; tetrahydrofolate biosynthesis; 5,6,7,8-tetrahydrofolate from 7,8-dihydrofolate: step 1/1. In terms of biological role, key enzyme in folate metabolism. Catalyzes an essential reaction for de novo glycine and purine synthesis, and for DNA precursor synthesis. This chain is Dihydrofolate reductase (DFR1), found in Saccharomyces cerevisiae (strain ATCC 204508 / S288c) (Baker's yeast).